The chain runs to 265 residues: MKIGIDAGGTLIKIVQEHDNRRYYRTELTTNIQKVIDWLNNEEIETLKLTGGNAGVIADQIHHSPEIFVEFDASSKGLEILLDEQGHQIEHYIFANVGTGTSFHYFDGKDQQRVGGVGTGGGMIQGLGYLLSNITDYKELTNLAQNGDRDAIDLKVKHIYKDTEPPIPGDLTAANFGNVLHHLDNQFTSANKLASAIGVVGEVITTMAITLAREYKTNHVVYIGSSFNNNQLLREVVENYTVLRGFKPYYIENGAFSGALGALYL.

6–13 lines the ATP pocket; sequence DAGGTLIK. Glutamate 70 (proton acceptor) is an active-site residue. ATP is bound by residues threonine 99, 121–125, tyrosine 137, and serine 225; that span reads GGMIQ.

Belongs to the type II pantothenate kinase family. Homodimer.

Its subcellular location is the cytoplasm. It carries out the reaction (R)-pantothenate + ATP = (R)-4'-phosphopantothenate + ADP + H(+). It functions in the pathway cofactor biosynthesis; coenzyme A biosynthesis; CoA from (R)-pantothenate: step 1/5. Its function is as follows. Catalyzes the phosphorylation of pantothenate (Pan), the first step in CoA biosynthesis. The chain is Type II pantothenate kinase from Staphylococcus epidermidis (strain ATCC 12228 / FDA PCI 1200).